The primary structure comprises 122 residues: Large ribosomal subunit protein uL18 (122 aa).

The segment at 1 to 26 (MSNLSRKQQTQKRHRRLRRHLKGTAQ) is disordered. A compositionally biased stretch (basic residues) spans 9–22 (QTQKRHRRLRRHLK).

Belongs to the universal ribosomal protein uL18 family. As to quaternary structure, part of the 50S ribosomal subunit; part of the 5S rRNA/L5/L18/L25 subcomplex. Contacts the 5S and 23S rRNAs.

Its function is as follows. This is one of the proteins that bind and probably mediate the attachment of the 5S RNA into the large ribosomal subunit, where it forms part of the central protuberance. This is Large ribosomal subunit protein uL18 from Prochlorococcus marinus (strain MIT 9313).